Consider the following 563-residue polypeptide: Type 2 DNA topoisomerase 6 subunit B (563 aa).

ATP is bound by residues Asn-46, Asp-78, Thr-99–Lys-100, Gly-109–Ser-116, and Lys-471.

Belongs to the TOP6B family. In terms of assembly, homodimer. Heterotetramer of two Top6A and two Top6B chains.

It carries out the reaction ATP-dependent breakage, passage and rejoining of double-stranded DNA.. Relaxes both positive and negative superturns and exhibits a strong decatenase activity. The sequence is that of Type 2 DNA topoisomerase 6 subunit B from Thermococcus onnurineus (strain NA1).